Reading from the N-terminus, the 712-residue chain is MEQEKRIFSIDWAGRPLVVEIGQLAKQANGAVLVRYGDTVVLNTATASKEAKNVDFFPLTVNYEERLYAVGKIPGGFIKREGRPSEKAILASRLIDRPIRPLFAEGFRNEVQIVSMVMSVDQDCSPEMAALFGASLALTISDIPFEGPIAGVTVGRVDGEFVINPTVEQSEKSDIHLVVAGTKDAINMVEAGADEVPEEVILEAIMFGHEEVKRLIAFQEEIAAQVGKEKMEVVLYELDPQLEAEIRQLAEEDIKRAVQVPEKLARDAAIEEVKASVIAKYEEQEADEETLKQVNEILHKLVKEEVRRLITEEKIRPDGRKIDEIRPLSSEVGVLPRTHGSGLFTRGQTQVLSVCTLGALGDVQILDGLGIEETKRFMHHYNFPPFSVGETGPMRGPGRREIGHGALGERALEPVVPSEKEFPYTIRLVSEVLESNGSTSQASICASTLAMMDAGVPIKAPVAGIAMGLVKNDDNYTILTDIQGIEDHLGDMDFKVAGTAKGVTALQMDIKIKGLSREILEEALQQAKKGRMEILEHMMQTIREPRKELSKYAPKILTMQINPEKIREVIGPSGKQINKIIDETGVKIDIEQDGTIFISSVNEAMNQKAKQIIEDIVREVEVGQIYLGKVKRIEKFGAFVELFNGKDGLVHISELAEERVGRVEDVVSIGDEILVKVMEIDKQGRVNLSRKAVLRDKKEKKGKRPERHRMKP.

Mg(2+) is bound by residues Asp-487 and Asp-493. In terms of domain architecture, KH spans Pro-554–Ile-613. The S1 motif domain occupies Gly-623–Lys-691.

The protein belongs to the polyribonucleotide nucleotidyltransferase family. Mg(2+) is required as a cofactor.

It is found in the cytoplasm. The catalysed reaction is RNA(n+1) + phosphate = RNA(n) + a ribonucleoside 5'-diphosphate. In terms of biological role, involved in mRNA degradation. Catalyzes the phosphorolysis of single-stranded polyribonucleotides processively in the 3'- to 5'-direction. This Geobacillus sp. (strain WCH70) protein is Polyribonucleotide nucleotidyltransferase.